Consider the following 459-residue polypeptide: Serine protease HTRA3 (459 aa).

An N-terminal signal peptide occupies residues 1–23; that stretch reads MQARALLPATLAILATLAVLALA. Residues 27–90 enclose the IGFBP N-terminal domain; the sequence is PAAPCPARCD…ECVRGVCRCR (64 aa). 8 disulfides stabilise this stretch: Cys-31–Cys-54, Cys-35–Cys-56, Cys-40–Cys-57, Cys-45–Cys-60, Cys-68–Cys-82, Cys-76–Cys-87, Cys-89–Cys-107, and Cys-96–Cys-132. In terms of domain architecture, Kazal-like spans 76 to 134; the sequence is CGDSLECVRGVCRCRWTHTVCGTDGHTYADVCALQAASRRALQVSGTPVRQLQKGACPS. Positions 181 to 347 are serine protease; sequence GSGFIMSEAG…IPSDRITRFL (167 aa). Catalysis depends on charge relay system residues His-197, Asp-233, and Ser-311. The PDZ domain maps to 365-450; it reads IRMRTITPSL…EVRRGNDDLL (86 aa).

The protein belongs to the peptidase S1C family. Homotrimer. Interacts with MYH9. Interacts with TGFB1; the interaction inhibits TGFB-mediated signaling. Interacts with BMP4; the interaction inhibits BMP4-mediated signaling. Interacts with TGFB2 and GDF5. Highest level of isoform 1 in maternal part of the placenta, moderate level in heart, testis and ovary, low level in muscle and lung. High expression found in granulosa cells of the ovary. Expressed in bone matrix, particularly in articular chondrocytes. Very low level of isoform 2 expressed in placenta. Expressed in the bone matrix, particularly in articular chondrocytes.

It localises to the secreted. Serine protease that cleaves beta-casein/CSN2 as well as several extracellular matrix (ECM) proteoglycans such as decorin/DCN, biglycan/BGN and fibronectin/FN1. Inhibits signaling mediated by TGF-beta family proteins possibly indirectly by degradation of these ECM proteoglycans. May act as a tumor suppressor. Negatively regulates, in vitro, trophoblast invasion during placental development and may be involved in the development of the placenta in vivo. May also have a role in ovarian development, granulosa cell differentiation and luteinization. This Mus musculus (Mouse) protein is Serine protease HTRA3 (Htra3).